We begin with the raw amino-acid sequence, 179 residues long: Cell division protein SepF (179 aa).

A disordered region spans residues Glu-18–Lys-55. Over residues Pro-34 to Lys-55 the composition is skewed to polar residues.

Belongs to the SepF family. In terms of assembly, homodimer. Interacts with FtsZ.

Its subcellular location is the cytoplasm. Cell division protein that is part of the divisome complex and is recruited early to the Z-ring. Probably stimulates Z-ring formation, perhaps through the cross-linking of FtsZ protofilaments. Its function overlaps with FtsA. The polypeptide is Cell division protein SepF (Streptococcus pneumoniae (strain ATCC 700669 / Spain 23F-1)).